The sequence spans 133 residues: MTLNLCVLTPNRIVWDSEVKEIILSTNSGQIGVLPNHAPIATAVDIGILRIRLNDQWLTMALMGGFARIGNNEITILVNDAEKGSDIDPQEAQQALEIAEANLRKAEGKRQTIEANLALRRARTRVEAINAIS.

It belongs to the ATPase epsilon chain family. In terms of assembly, F-type ATPases have 2 components, CF(1) - the catalytic core - and CF(0) - the membrane proton channel. CF(1) has five subunits: alpha(3), beta(3), gamma(1), delta(1), epsilon(1). CF(0) has three main subunits: a, b and c.

Its subcellular location is the plastid. It is found in the chloroplast thylakoid membrane. Functionally, produces ATP from ADP in the presence of a proton gradient across the membrane. The sequence is that of ATP synthase epsilon chain, chloroplastic from Gossypium barbadense (Sea Island cotton).